Here is a 172-residue protein sequence, read N- to C-terminus: MALQFIVWKCKSTCQLSQSTGGFRADLTTLNRIPEARLPMTNEASTSFSSTDAITKLNFVTMLQIVKPMIVSLLGYVDTIIEYNQNKSLFNPENYRGENNNSDNLVNFTQMSNTCVTLFQEIMQNYINSHNLKLMSKNSTPNEILSLETNIYKEIMSFLDLTIMMMKGDILK.

This is an uncharacterized protein from Microplitis demolitor bracovirus (isolate Webb) (MdBV).